The chain runs to 155 residues: RNA pyrophosphohydrolase (155 aa).

Positions 5–147 constitute a Nudix hydrolase domain; it reads RYRPNVAAIV…KRPVYKKVLE (143 aa). The short motif at 42 to 63 is the Nudix box element; it reads GGIDKGESPKEALLRELKEEIG.

It belongs to the Nudix hydrolase family. RppH subfamily. It depends on a divalent metal cation as a cofactor.

In terms of biological role, accelerates the degradation of transcripts by removing pyrophosphate from the 5'-end of triphosphorylated RNA, leading to a more labile monophosphorylated state that can stimulate subsequent ribonuclease cleavage. The protein is RNA pyrophosphohydrolase of Nitratiruptor sp. (strain SB155-2).